The chain runs to 28 residues: Ribosome-inactivating protein pleuturegin (28 aa).

This sequence belongs to the ribosome-inactivating protein family.

The catalysed reaction is Endohydrolysis of the N-glycosidic bond at one specific adenosine on the 28S rRNA.. In terms of biological role, inhibits protein synthesis in animal cells. Does not possess ribonuclease activity. In Pleurotus tuber-regium (King tuber oyster mushroom), this protein is Ribosome-inactivating protein pleuturegin.